The primary structure comprises 87 residues: Sec-independent protein translocase protein TatA (87 aa).

A helical transmembrane segment spans residues 1–21 (MGGISIWQLLIIALIIVLLFG). The tract at residues 54–87 (NTEADADFEQKTLSKEEQQSEDPVQKSQKDKEQV) is disordered.

This sequence belongs to the TatA/E family. The Tat system comprises two distinct complexes: a TatABC complex, containing multiple copies of TatA, TatB and TatC subunits, and a separate TatA complex, containing only TatA subunits. Substrates initially bind to the TatABC complex, which probably triggers association of the separate TatA complex to form the active translocon.

The protein localises to the cell inner membrane. In terms of biological role, part of the twin-arginine translocation (Tat) system that transports large folded proteins containing a characteristic twin-arginine motif in their signal peptide across membranes. TatA could form the protein-conducting channel of the Tat system. This chain is Sec-independent protein translocase protein TatA, found in Photobacterium profundum (strain SS9).